The sequence spans 276 residues: Shikimate dehydrogenase (NADP(+)) (276 aa).

Shikimate contacts are provided by residues 19–21 (SKS) and threonine 66. Lysine 70 acts as the Proton acceptor in catalysis. Aspartate 82 serves as a coordination point for NADP(+). Residues asparagine 91 and aspartate 107 each contribute to the shikimate site. Residues 133–137 (GAGGA), 157–162 (NRTRSR), and leucine 222 each bind NADP(+). Residue tyrosine 224 coordinates shikimate. Glycine 245 contributes to the NADP(+) binding site.

The protein belongs to the shikimate dehydrogenase family. Homodimer.

It catalyses the reaction shikimate + NADP(+) = 3-dehydroshikimate + NADPH + H(+). It participates in metabolic intermediate biosynthesis; chorismate biosynthesis; chorismate from D-erythrose 4-phosphate and phosphoenolpyruvate: step 4/7. Functionally, involved in the biosynthesis of the chorismate, which leads to the biosynthesis of aromatic amino acids. Catalyzes the reversible NADPH linked reduction of 3-dehydroshikimate (DHSA) to yield shikimate (SA). The protein is Shikimate dehydrogenase (NADP(+)) of Ruegeria sp. (strain TM1040) (Silicibacter sp.).